The sequence spans 665 residues: Adenylate cyclase 1 (665 aa).

Residues 1-25 (MLQRSESGFKDIESMQDSNADKPSR) form a disordered region. Positions 7–24 (SGFKDIESMQDSNADKPS) are enriched in basic and acidic residues. 2 consecutive transmembrane segments (helical) span residues 33–53 (SLLG…LVGL) and 373–393 (AVSG…AHLI). Residues 394 to 444 (TKSLNQLTDSANRLQDLDFATPIDVSSHVAEISTLNGAMNRARDAIFTFAL) enclose the HAMP domain. The Guanylate cyclase domain maps to 471–603 (TAMFTDIYDF…DTVNVASRLE (133 aa)). Mg(2+)-binding residues include Asp-476 and Asp-520.

The protein belongs to the adenylyl cyclase class-3 family. Mg(2+) serves as cofactor.

It is found in the cell membrane. It carries out the reaction ATP = 3',5'-cyclic AMP + diphosphate. Functionally, plays essential roles in regulation of cellular metabolism by catalyzing the synthesis of a second messenger, cAMP. This chain is Adenylate cyclase 1 (cya1), found in Rhizobium meliloti (strain 1021) (Ensifer meliloti).